The primary structure comprises 43 residues: Protein PsbN (43 aa).

The helical transmembrane segment at 7-27 (LSISIGVMVVAITGFSIYTAF) threads the bilayer.

This sequence belongs to the PsbN family.

Its subcellular location is the cellular thylakoid membrane. May play a role in photosystem I and II biogenesis. This chain is Protein PsbN, found in Trichodesmium erythraeum (strain IMS101).